Here is a 919-residue protein sequence, read N- to C-terminus: Probable dipeptidyl-aminopeptidase B (919 aa).

Basic and acidic residues predominate over residues 1–10 (MRRSDGHEET). The disordered stretch occupies residues 1–53 (MRRSDGHEETSEFLPMTHSRSVSAASQTSTDSSLSTESLFPREQKPFPNAMGG). Over 1–92 (MRRSDGHEET…AATGGGRARR (92 aa)) the chain is Cytoplasmic. Residues 21-38 (SVSAASQTSTDSSLSTES) are compositionally biased toward low complexity. The chain crosses the membrane as a helical; Signal-anchor for type II membrane protein span at residues 93 to 113 (IFWILVLLCLGGWLLAFVLFL). At 114 to 919 (TGGRANYQTA…MKRSLRLLSP (806 aa)) the chain is on the vacuolar side. 3 N-linked (GlcNAc...) asparagine glycosylation sites follow: N200, N352, and N643. Catalysis depends on S757, which acts as the Charge relay system. A glycan (N-linked (GlcNAc...) asparagine) is linked at N811. Active-site charge relay system residues include D834 and H867.

This sequence belongs to the peptidase S9B family.

It localises to the vacuole membrane. It carries out the reaction Release of an N-terminal dipeptide, Xaa-Yaa-|-Zaa-, from a polypeptide, preferentially when Yaa is Pro, provided Zaa is neither Pro nor hydroxyproline.. Type IV dipeptidyl-peptidase which removes N-terminal dipeptides sequentially from polypeptides having unsubstituted N-termini provided that the penultimate residue is proline. The polypeptide is Probable dipeptidyl-aminopeptidase B (dapB) (Aspergillus fumigatus (strain CBS 144.89 / FGSC A1163 / CEA10) (Neosartorya fumigata)).